Reading from the N-terminus, the 185-residue chain is Ribosome-recycling factor (185 aa).

This sequence belongs to the RRF family.

It is found in the cytoplasm. Functionally, responsible for the release of ribosomes from messenger RNA at the termination of protein biosynthesis. May increase the efficiency of translation by recycling ribosomes from one round of translation to another. The sequence is that of Ribosome-recycling factor from Pseudomonas fluorescens (strain ATCC BAA-477 / NRRL B-23932 / Pf-5).